Reading from the N-terminus, the 295-residue chain is Bifunctional protein FolD (295 aa).

NADP(+) contacts are provided by residues 165–167 (GRG), Ser-192, and Ile-233.

It belongs to the tetrahydrofolate dehydrogenase/cyclohydrolase family. Homodimer.

It catalyses the reaction (6R)-5,10-methylene-5,6,7,8-tetrahydrofolate + NADP(+) = (6R)-5,10-methenyltetrahydrofolate + NADPH. The enzyme catalyses (6R)-5,10-methenyltetrahydrofolate + H2O = (6R)-10-formyltetrahydrofolate + H(+). It functions in the pathway one-carbon metabolism; tetrahydrofolate interconversion. Catalyzes the oxidation of 5,10-methylenetetrahydrofolate to 5,10-methenyltetrahydrofolate and then the hydrolysis of 5,10-methenyltetrahydrofolate to 10-formyltetrahydrofolate. This Tropheryma whipplei (strain Twist) (Whipple's bacillus) protein is Bifunctional protein FolD.